Reading from the N-terminus, the 1214-residue chain is Protein argonaute-2 (1214 aa).

Residues Met-1–Lys-412 are disordered. 2 stretches are compositionally biased toward low complexity: residues Pro-18–Ser-93 and Lys-107–Gly-117. Composition is skewed to gly residues over residues Gln-118–Gly-131, Gln-141–Gly-154, Gln-164–Gly-177, Gln-187–Gly-200, Gln-210–Gly-223, Gln-233–Gly-246, and Gln-256–Gly-269. Low complexity predominate over residues Gly-270–Gly-282. Gly residues-rich tracts occupy residues Gln-302–Gly-315, Gln-325–Gly-338, and Gln-348–Gly-361. Residues Gly-362–Pro-394 are compositionally biased toward low complexity. Residues Leu-608 to Glu-717 enclose the PAZ domain. Positions Tyr-681–Asn-686 are interaction with guide RNA. Residues Leu-885–Thr-1186 form the Piwi domain. A divalent metal cation contacts are provided by Asp-965 and Asp-1037. 3 interaction with guide RNA regions span residues Lys-1075–Arg-1076, His-1119–Lys-1127, and Phe-1156–Arg-1178. His-1173 is a binding site for a divalent metal cation.

It belongs to the argonaute family. Ago subfamily. In terms of assembly, interacts with Fmr1, Dcr-1 and vig to form the RNA-induced silencing complex (RISC), a ribonucleoprotein (RNP) complex involved in translation regulation, other components of the complex are RpL5, RpL11 and Rm62. As part of the RISC complex, interacts with Tudor-SN. Interacts with Taf11. (Microbial infection) Interacts with cricket paralysis virus protein 1A; this interaction may block the RISC activity. The cofactor is Mg(2+). It depends on Mn(2+) as a cofactor.

The protein resides in the nucleus. The protein localises to the cytoplasm. Its subcellular location is the cytoplasmic ribonucleoprotein granule. In terms of biological role, essential for RNA interference (RNAi); double-stranded RNA induces potent and specific gene silencing. RNAi is mediated by the RNA-induced silencing complex (RISC), a sequence-specific, multicomponent nuclease that destroys or silences messenger RNAs homologous to the silencing trigger. This is Protein argonaute-2 from Drosophila melanogaster (Fruit fly).